The following is a 471-amino-acid chain: 5-hydroxytryptamine receptor 2A (471 aa).

At methionine 1–leucine 80 the chain is on the extracellular side. N-linked (GlcNAc...) asparagine glycans are attached at residues asparagine 8, asparagine 38, asparagine 44, asparagine 51, and asparagine 54. A helical membrane pass occupies residues threonine 81 to methionine 97. Topologically, residues alanine 98–tyrosine 111 are cytoplasmic. The chain crosses the membrane as a helical span at residues phenylalanine 112–tyrosine 137. Residues glycine 138–lysine 146 are Extracellular-facing. Residues leucine 147–leucine 171 form a helical membrane-spanning segment. Cysteine 148 and cysteine 227 form a disulfide bridge. A serotonin-binding site is contributed by aspartate 155. The DRY motif; important for ligand-induced conformation changes signature appears at aspartate 172–tyrosine 174. The Cytoplasmic portion of the chain corresponds to aspartate 172–lysine 191. Residues alanine 192 to leucine 215 traverse the membrane as a helical segment. Over glutamine 216–aspartate 232 the chain is Extracellular. The helical transmembrane segment at asparagine 233–isoleucine 258 threads the bilayer. The Cytoplasmic portion of the chain corresponds to lysine 259–cysteine 322. Serine 280 carries the phosphoserine modification. A helical membrane pass occupies residues lysine 323 to isoleucine 348. Position 343 (asparagine 343) interacts with serotonin. Cysteine 349 and cysteine 353 form a disulfide bridge. Residues cysteine 349–aspartate 356 are Extracellular-facing. The chain crosses the membrane as a helical span at residues valine 357 to leucine 382. The short motif at asparagine 376–tyrosine 380 is the NPxxY motif; important for ligand-induced conformation changes and signaling element. Over phenylalanine 383–valine 471 the chain is Cytoplasmic. The segment covering glutamine 451 to asparagine 465 has biased composition (basic and acidic residues). Residues glutamine 451–valine 471 are disordered. The PDZ-binding signature appears at serine 469–valine 471.

Belongs to the G-protein coupled receptor 1 family. In terms of assembly, interacts (via C-terminus) with MPDZ and PATJ. May interact (via C-terminus) with MPP3, PRDX6, DLG4, DLG1, CASK, APBA1 and MAGI2. Interacts with GRM2 and DRD2; this may affect signaling. Detected in brain cortex (at protein level). Detected in blood platelets.

It localises to the cell membrane. The protein localises to the cell projection. The protein resides in the dendrite. It is found in the axon. Its subcellular location is the cytoplasmic vesicle. It localises to the membrane. The protein localises to the caveola. The protein resides in the presynapse. G-protein coupled receptor activity is regulated by lipids: oleamide increases HTR2A-mediated activity. Inhibited by IHCH-7179 small molecule: IHCH-7179 acts both as an agonist activator for HTR1A and as an antagonist inhibitor for HTR2A. Functionally, G-protein coupled receptor for 5-hydroxytryptamine (serotonin). Also functions as a receptor for various drugs and psychoactive substances, including mescaline, psilocybin, 1-(2,5-dimethoxy-4-iodophenyl)-2-aminopropane (DOI) and lysergic acid diethylamide (LSD). Ligand binding causes a conformation change that triggers signaling via guanine nucleotide-binding proteins (G proteins) and modulates the activity of downstream effectors. HTR2A is coupled to G(q)/G(11) G alpha proteins and activates phospholipase C-beta, releasing diacylglycerol (DAG) and inositol 1,4,5-trisphosphate (IP3) second messengers that modulate the activity of phosphatidylinositol 3-kinase and promote the release of Ca(2+) ions from intracellular stores, respectively. Beta-arrestin family members inhibit signaling via G proteins and mediate activation of alternative signaling pathways. Affects neural activity, perception, cognition and mood. Plays a role in the regulation of behavior, including responses to anxiogenic situations and psychoactive substances. Plays a role in intestinal smooth muscle contraction, and may play a role in arterial vasoconstriction. In terms of biological role, (Microbial infection) Acts as a receptor for human JC polyomavirus/JCPyV. In Homo sapiens (Human), this protein is 5-hydroxytryptamine receptor 2A.